Reading from the N-terminus, the 216-residue chain is Uracil phosphoribosyltransferase (216 aa).

CTP is bound by residues 29-30 (RK) and Arg37. 30–34 (KNLVR) lines the GTP pocket. Arg80 is a 5-phospho-alpha-D-ribose 1-diphosphate binding site. 87 to 96 (EGLLKAFPKA) is a binding site for CTP. 5-phospho-alpha-D-ribose 1-diphosphate is bound by residues Arg105 and 140-148 (DPMIATAST). Residues Ile203 and 208–210 (GDA) contribute to the uracil site. 5-phospho-alpha-D-ribose 1-diphosphate is bound at residue Asp209.

The protein belongs to the UPRTase family. Homotetramer. The cofactor is Mg(2+).

It catalyses the reaction UMP + diphosphate = 5-phospho-alpha-D-ribose 1-diphosphate + uracil. It functions in the pathway pyrimidine metabolism; UMP biosynthesis via salvage pathway; UMP from uracil: step 1/1. Its activity is regulated as follows. Allosterically activated by GTP. Inhibited by CTP and UMP in combination. Its function is as follows. Catalyzes the conversion of uracil and 5-phospho-alpha-D-ribose 1-diphosphate (PRPP) to UMP and diphosphate. In Saccharolobus solfataricus (strain ATCC 35092 / DSM 1617 / JCM 11322 / P2) (Sulfolobus solfataricus), this protein is Uracil phosphoribosyltransferase (upp).